Reading from the N-terminus, the 379-residue chain is Chaperone protein DnaJ (379 aa).

One can recognise a J domain in the interval 5–70 (DYYEVLGVQK…QKRAAYDRFG (66 aa)). A CR-type zinc finger spans residues 137–215 (GATTTVRVPT…CGGQGRVRKE (79 aa)). Zn(2+)-binding residues include cysteine 150, cysteine 153, cysteine 167, cysteine 170, cysteine 189, cysteine 192, cysteine 203, and cysteine 206. CXXCXGXG motif repeat units lie at residues 150–157 (CESCNGTG), 167–174 (CPTCNGHG), 189–196 (CPACHGVG), and 203–210 (CRTCGGQG).

Belongs to the DnaJ family. In terms of assembly, homodimer. Zn(2+) serves as cofactor.

Its subcellular location is the cytoplasm. Its function is as follows. Participates actively in the response to hyperosmotic and heat shock by preventing the aggregation of stress-denatured proteins and by disaggregating proteins, also in an autonomous, DnaK-independent fashion. Unfolded proteins bind initially to DnaJ; upon interaction with the DnaJ-bound protein, DnaK hydrolyzes its bound ATP, resulting in the formation of a stable complex. GrpE releases ADP from DnaK; ATP binding to DnaK triggers the release of the substrate protein, thus completing the reaction cycle. Several rounds of ATP-dependent interactions between DnaJ, DnaK and GrpE are required for fully efficient folding. Also involved, together with DnaK and GrpE, in the DNA replication of plasmids through activation of initiation proteins. The sequence is that of Chaperone protein DnaJ from Rhodospirillum centenum (strain ATCC 51521 / SW).